Here is a 390-residue protein sequence, read N- to C-terminus: Centrosomal protein of 44 kDa (390 aa).

The tract at residues 11–195 (RNLEQVLRLL…ISEDTLSPIT (185 aa)) is binds with microtubules and centrioles. A coiled-coil region spans residues 233–267 (EITALQTMLAECQEKLKELTLIEKRLDCLEQKMKG). A disordered region spans residues 323–347 (KNKVGRPASIPLSSRYSTASSDSTP). 2 positions are modified to phosphoserine: S331 and S345. Residues 335–345 (SSRYSTASSDS) are compositionally biased toward low complexity. At T346 the chain carries Phosphothreonine. The stretch at 361 to 385 (SEETTIQKMERMKKMFEETAELLKC) forms a coiled coil.

In terms of assembly, interacts with CROCC. Interacts with POC1B; the interaction is direct and recruits POC1B to centriolar microtubules. Binds to centriolar microtubules.

The protein resides in the cytoplasm. The protein localises to the cytoskeleton. It localises to the microtubule organizing center. Its subcellular location is the centrosome. It is found in the centriole. The protein resides in the spindle pole. The protein localises to the midbody. In terms of biological role, centriole-enriched microtubule-binding protein involved in centriole biogenesis. In collaboration with CEP295 and POC1B, is required for the centriole-to-centrosome conversion by ensuring the formation of bona fide centriole wall. Functions as a linker component that maintains centrosome cohesion. Associates with CROCC and regulates its stability and localization to the centrosome. This Macaca fascicularis (Crab-eating macaque) protein is Centrosomal protein of 44 kDa (CEP44).